We begin with the raw amino-acid sequence, 184 residues long: RNA 2',3'-cyclic phosphodiesterase (184 aa).

His-40 acts as the Proton donor in catalysis. 2 consecutive short sequence motifs (HXTX) follow at residues 40–43 (HITL) and 125–128 (HITL). The active-site Proton acceptor is the His-125.

It belongs to the 2H phosphoesterase superfamily. ThpR family.

It carries out the reaction a 3'-end 2',3'-cyclophospho-ribonucleotide-RNA + H2O = a 3'-end 2'-phospho-ribonucleotide-RNA + H(+). Its function is as follows. Hydrolyzes RNA 2',3'-cyclic phosphodiester to an RNA 2'-phosphomonoester. In vitro, ligates 5' and 3' half-tRNA molecules with 2',3'-cyclic phosphate and 5'-hydroxyl termini, respectively, to the product containing the 2'-5' phosphodiester linkage. Ligase activity requires GTP, but GTP hydrolysis is not required for the reaction, which is reversible. Ligase activity is weak compared to the phosphodiesterase activity. This chain is RNA 2',3'-cyclic phosphodiesterase, found in Pyrococcus furiosus (strain ATCC 43587 / DSM 3638 / JCM 8422 / Vc1).